We begin with the raw amino-acid sequence, 389 residues long: MFFKIFVENTVILPNPLILTKIEGLLMIEYLLKNREQIIKKMEKINDINRKEVEEKWILDNFENPKDMGFAGGDGSCNKLDYISFSFYGVGAVSFIHGRGEKVKKAKEEYIFDITHPLDIEDRIRRYMLTLELKTALYVLKNYNIDYYIFDGSLFSLLIFTKKGIEMYERELEEIYNEYGKEFNKKIDEETKSGEIGIISKDLNLELNKKILVEHVEYILTLTKLINEFKDRIIGISKTSKINIYFDKNMPDIAIFTKYTDKSGYSEPIDFVNKLGDEKKEKHKQLSSVVKGINFIKNKPFYAKIDTAYIQFVRLEDNCGVVGLTSFNKIDKEVLSSLKEISINGYPYILKKSHETVEITTKKLEAIAKLLNIDDPIARHILGKKKKKF.

Positions 74 and 151 each coordinate Mn(2+).

This sequence belongs to the NurA family. Mn(2+) serves as cofactor.

Functionally, involved in DNA double-strand break (DSB) repair. Probably acts with HerA to stimulate resection of the 5' strand and produce the long 3' single-strand that is required for RadA loading. This chain is Probable DNA double-strand break repair nuclease NurA, found in Methanocaldococcus jannaschii (strain ATCC 43067 / DSM 2661 / JAL-1 / JCM 10045 / NBRC 100440) (Methanococcus jannaschii).